Reading from the N-terminus, the 571-residue chain is Asparagine--tRNA ligase, cytoplasmic 3 (571 aa).

At Gly2 the chain carries N-acetylglycine. The segment at residues 50 to 128 (VRIGGWVKTG…QSIELSVETV (79 aa)) is a DNA-binding region (OB). A WHEP-TRS domain is found at 233-289 (DVEAARLIVKERGEAVAQLKVAKASKEEITASVAQLSVAKASLAHVEERLRLKPGLP).

Belongs to the class-II aminoacyl-tRNA synthetase family.

The protein resides in the cytoplasm. Its subcellular location is the cytosol. It carries out the reaction tRNA(Asn) + L-asparagine + ATP = L-asparaginyl-tRNA(Asn) + AMP + diphosphate + H(+). This is Asparagine--tRNA ligase, cytoplasmic 3 from Arabidopsis thaliana (Mouse-ear cress).